Consider the following 608-residue polypeptide: UvrABC system protein C (608 aa).

The region spanning 16-94 (NRPGVYRMFD…IKEWRPPYNI (79 aa)) is the GIY-YIG domain. The region spanning 204 to 239 (NALADELNTGMEQAAMRLDFEKAAELRDQVAILRRV) is the UVR domain.

Belongs to the UvrC family. Interacts with UvrB in an incision complex.

It is found in the cytoplasm. Functionally, the UvrABC repair system catalyzes the recognition and processing of DNA lesions. UvrC both incises the 5' and 3' sides of the lesion. The N-terminal half is responsible for the 3' incision and the C-terminal half is responsible for the 5' incision. The chain is UvrABC system protein C from Pseudomonas paraeruginosa (strain DSM 24068 / PA7) (Pseudomonas aeruginosa (strain PA7)).